The following is a 445-amino-acid chain: Argininosuccinate synthase (445 aa).

ATP contacts are provided by residues 17–25 (AFSGGLDTS) and alanine 43. Tyrosine 99 contacts L-citrulline. Glycine 129 and threonine 131 together coordinate ATP. 3 residues coordinate L-aspartate: threonine 131, asparagine 135, and aspartate 136. Asparagine 135 contributes to the L-citrulline binding site. Position 136 (aspartate 136) interacts with ATP. Arginine 139 and serine 192 together coordinate L-citrulline. ATP is bound at residue aspartate 194. Residues threonine 201, glutamate 203, and glutamate 280 each coordinate L-citrulline.

This sequence belongs to the argininosuccinate synthase family. Type 2 subfamily. In terms of assembly, homotetramer.

The protein localises to the cytoplasm. It catalyses the reaction L-citrulline + L-aspartate + ATP = 2-(N(omega)-L-arginino)succinate + AMP + diphosphate + H(+). It functions in the pathway amino-acid biosynthesis; L-arginine biosynthesis; L-arginine from L-ornithine and carbamoyl phosphate: step 2/3. The polypeptide is Argininosuccinate synthase (Burkholderia ambifaria (strain MC40-6)).